Here is a 579-residue protein sequence, read N- to C-terminus: MNKLYIGNLSDHAGPADLESVFKDAKIPVAGPFLVKTGYAFVDCPDEGWALKAIEALSGKMELHGKPMEVEHSVPKRQRIRKLQIRNIPPHLQWEVLDSLLVQYGVVESCEQVNTDSETAVVNVTYSSKDQARQALDKLNGFQLENFTLKVAYIPDETAAQQNPSPQLRGRRGPGQRGSSRQASPGSVSKQKPCDLPLRLLVPTQFVGAIIGKEGATIRNITKQTQSKIDVHRKENTGAAEKSITILSTPEGTSAACKSILEIMHKEAQDIKFTEEIPLKILAHNNFVGRLIGKEGRNLKKIEQDTDTKITISPLQELTLYNPERTITVKGSVETCAKAEEEIMKKIRESYENDIASMNLQAHLIPGLNLNALGLFPPTSGMPPPTSGPPSTLTPPYPQFEQSETETVHLFIPALSVGAIIGKQGQHIKQLSRFAGASIKIAPAEAPDAKVRMVIITGPPEAQFKAQGRIYGKIKEENFVSPKEEVKLEAHIRVPSFAAGRVIGKGGKTVNELQSLSSAEVVVPRDQTPDENDQVVVKITGHFYACQVAQRKIQEILTQVKQHQQQKALQSGPPQSRRK.

RRM domains follow at residues 2-75 (NKLY…HSVP) and 81-156 (RKLQ…YIPD). The tract at residues 158 to 192 (TAAQQNPSPQLRGRRGPGQRGSSRQASPGSVSKQK) is disordered. Serine 165 bears the Phosphoserine mark. Position 184 is a phosphoserine; by MTOR (serine 184). KH domains are found at residues 195–260 (DLPL…CKSI), 276–343 (EIPL…EEEI), and 405–470 (TETV…QGRI). Residues lysine 450 and lysine 475 each participate in a glycyl lysine isopeptide (Lys-Gly) (interchain with G-Cter in SUMO2) cross-link. A KH 4 domain is found at 487 to 553 (KLEAHIRVPS…YACQVAQRKI (67 aa)). Threonine 528 carries the post-translational modification Phosphothreonine.

Belongs to the RRM IMP/VICKZ family. Can form homooligomers and heterooligomers with IGF2BP1 and IGF2BP3 in an RNA-dependent manner. Interacts with IGF2BP1. Interacts with ELAVL1, DHX9, HNRNPU, MATR3 and PABPC1. In terms of tissue distribution, expressed in oocytes, spermatogonia and spermatocytes (at protein level).

It is found in the nucleus. The protein localises to the cytoplasm. Its subcellular location is the P-body. It localises to the stress granule. RNA-binding factor that may recruit target transcripts to cytoplasmic protein-RNA complexes (mRNPs). This transcript 'caging' into mRNPs allows mRNA transport and transient storage. It also modulates the rate and location at which target transcripts encounter the translational apparatus and shields them from endonuclease attacks or microRNA-mediated degradation. Preferentially binds to N6-methyladenosine (m6A)-containing mRNAs and increases their stability. Binds to the 3'-UTR of CD44 mRNA and stabilizes it, hence promotes cell adhesion and invadopodia formation. Binds to beta-actin/ACTB and MYC transcripts. Increases MYC mRNA stability by binding to the coding region instability determinant (CRD) and binding is enhanced by m6A-modification of the CRD. Binds to the 5'-UTR of the insulin-like growth factor 2 (IGF2) mRNAs. This Mus musculus (Mouse) protein is Insulin-like growth factor 2 mRNA-binding protein 3 (Igf2bp3).